The sequence spans 202 residues: Dephospho-CoA kinase (202 aa).

The DPCK domain maps to 5 to 202; sequence IVGLTGGIAS…DADYRARSDR (198 aa). Position 13–18 (13–18) interacts with ATP; that stretch reads ASGKSA.

It belongs to the CoaE family.

The protein localises to the cytoplasm. The catalysed reaction is 3'-dephospho-CoA + ATP = ADP + CoA + H(+). Its pathway is cofactor biosynthesis; coenzyme A biosynthesis; CoA from (R)-pantothenate: step 5/5. Catalyzes the phosphorylation of the 3'-hydroxyl group of dephosphocoenzyme A to form coenzyme A. This is Dephospho-CoA kinase from Xanthomonas oryzae pv. oryzae (strain MAFF 311018).